Here is a 118-residue protein sequence, read N- to C-terminus: Protein Rev (118 aa).

Ser5 and Ser8 each carry phosphoserine; by host CK2. The interval 18–26 (LIKFLYQSN) is homomultimerization. The interval 23–46 (YQSNPPPSPEGTRQARRNRRRRWR) is disordered. Residues 34–50 (TRQARRNRRRRWRARQR) carry the Nuclear localization signal and RNA-binding (RRE) motif. Positions 36-46 (QARRNRRRRWR) are enriched in basic residues. The Nuclear export signal and binding to XPO1 signature appears at 73-84 (LQLPPLERLNLN). A disordered region spans residues 87-118 (EDCRTSGTQGVGHPQISVESPTVLESGTEEQC). Phosphoserine; by host is present on Ser92. Polar residues predominate over residues 103 to 112 (SVESPTVLES).

Belongs to the HIV-1 REV protein family. In terms of assembly, homomultimer; when bound to the RRE. Multimeric assembly is essential for activity and may involve XPO1. Binds to human KPNB1, XPO1, TNPO1, RANBP5 and IPO7. Interacts with the viral Integrase. Interacts with human KHDRBS1. Interacts with human NAP1; this interaction decreases Rev multimerization and stimulates its activity. Interacts with human DEAD-box helicases DDX3 and DDX24; these interactions may serve for viral RNA export to the cytoplasm and packaging, respectively. Interacts with human PSIP1; this interaction may inhibit HIV-1 DNA integration by promoting dissociation of the Integrase-LEDGF/p75 complex. Asymmetrically arginine dimethylated at one site by host PRMT6. Methylation impairs the RNA-binding activity and export of viral RNA from the nucleus to the cytoplasm. In terms of processing, phosphorylated by protein kinase CK2. Presence of, and maybe binding to the N-terminus of the regulatory beta subunit of CK2 is necessary for CK2-mediated Rev's phosphorylation.

It localises to the host nucleus. The protein localises to the host nucleolus. It is found in the host cytoplasm. Functionally, escorts unspliced or incompletely spliced viral pre-mRNAs (late transcripts) out of the nucleus of infected cells. These pre-mRNAs carry a recognition sequence called Rev responsive element (RRE) located in the env gene, that is not present in fully spliced viral mRNAs (early transcripts). This function is essential since most viral proteins are translated from unspliced or partially spliced pre-mRNAs which cannot exit the nucleus by the pathway used by fully processed cellular mRNAs. Rev itself is translated from a fully spliced mRNA that readily exits the nucleus. Rev's nuclear localization signal (NLS) binds directly to KPNB1/Importin beta-1 without previous binding to KPNA1/Importin alpha-1. KPNB1 binds to the GDP bound form of RAN (Ran-GDP) and targets Rev to the nucleus. In the nucleus, the conversion from Ran-GDP to Ran-GTP dissociates Rev from KPNB1 and allows Rev's binding to the RRE in viral pre-mRNAs. Rev multimerization on the RRE via cooperative assembly exposes its nuclear export signal (NES) to the surface. Rev can then form a complex with XPO1/CRM1 and Ran-GTP, leading to nuclear export of the complex. Conversion from Ran-GTP to Ran-GDP mediates dissociation of the Rev/RRE/XPO1/RAN complex, so that Rev can return to the nucleus for a subsequent round of export. Beside KPNB1, also seems to interact with TNPO1/Transportin-1, RANBP5/IPO5 and IPO7/RANBP7 for nuclear import. The nucleoporin-like HRB/RIP is an essential cofactor that probably indirectly interacts with Rev to release HIV RNAs from the perinuclear region to the cytoplasm. The polypeptide is Protein Rev (Human immunodeficiency virus type 1 group M subtype D (isolate ELI) (HIV-1)).